The primary structure comprises 700 residues: MQSALTPNTAAFLEYISPGHAPTSAPPAALFNNMPVPGRDTPEDTPPSVSNGSQPSAHQAPSDDSDSPTPEMPPAQPDDAANTDPLAGNGANKRKAGRPSAVLDDDDDDASDSDLPSGHEDKKQHGAGRAAAASASGSGRRGRKSGGGEGDGKRELSKSERRKEQNRAAQKAFRERREAKVKDLEDKVAELENKAYGTQIENENLRGILKRLQEENVALKQSAFTFSMPVNSRNSPNSNNGSFSAPAPQNRKPLTPPQSSNDDSLKAVDDIPMLPHRHSSANTISDNSSESLVSLRSTDRTPPALFSDHFNTYALGVVPVPPPSSSSQPTQKYPSASNGQQSISSNSNSSNVISPPSADQSEFNALWESLYPNDVENLVSQNASQNQGGPFTLLNSQPDSMSFASAGNNNSMNALFNFGAPSSPSISNSAQPSVNPAPASVTQPANHITQNLGATGQASDWNRFAFREPTAEASAPNWDLTDNSVNEFLASLSGDTTADATANDYLNNDDEAFNAQLRKIFGNDNSPSAAFNLPSTSFSPNNYLNMSPSPMMPLSNSQSPQSSDSRSNTNVSSGRGNDISMADSPEYSMGSSRTSVSHDSTDLQGKATTTTTTAIRSAKNYSCKSDNEVIHVVDEKGRVIKPSELWMRFGMQHENSTEHLLIDDLCDQMRAKATCKDGKMQLDITDAAVLFRRGERRPSQ.

Disordered stretches follow at residues 17 to 185 (SPGH…KDLE) and 228 to 296 (MPVN…VSLR). The Bipartite nuclear localization signal signature appears at 34-41 (MPVPGRDT). The span at 47–59 (PSVSNGSQPSAHQ) shows a compositional bias: polar residues. The Bipartite nuclear localization signal signature appears at 67 to 74 (SPTPEMPP). Over residues 103–112 (LDDDDDDASD) the composition is skewed to acidic residues. Residues 127–138 (AGRAAAASASGS) are compositionally biased toward low complexity. Positions 150 to 185 (GDGKRELSKSERRKEQNRAAQKAFRERREAKVKDLE) are enriched in basic and acidic residues. A bZIP domain is found at 156 to 219 (LSKSERRKEQ…KRLQEENVAL (64 aa)). The segment at 158–182 (KSERRKEQNRAAQKAFRERREAKVK) is basic motif. The tract at residues 184–191 (LEDKVAEL) is leucine-zipper. Transcription activation regions lie at residues 213–400 (QEEN…QPDS) and 452–577 (LGAT…GRGN). Residues 231 to 244 (NSRNSPNSNNGSFS) show a composition bias toward low complexity. Over residues 280 to 296 (SANTISDNSSESLVSLR) the composition is skewed to polar residues. The n-CRD stretch occupies residues 306–318 (FSDHFNTYALGVV). 2 disordered regions span residues 320-359 (VPPP…PSAD) and 542-609 (NYLN…KATT). Composition is skewed to low complexity over residues 335–358 (SASN…PPSA) and 542–573 (NYLN…NVSS). Polar residues predominate over residues 589-607 (MGSSRTSVSHDSTDLQGKA). Residues 642-675 (PSELWMRFGMQHENSTEHLLIDDLCDQMRAKATC) are c-CRD. The Nuclear export signal motif lies at 660–667 (LLIDDLCD). The cysteines at positions 666 and 675 are disulfide-linked.

The protein belongs to the bZIP family. YAP subfamily. In terms of processing, depending on the oxidative stress inducing agent, yap1 can undergo two distinct conformational changes, both involving disulfide bond formation, and both masking the nuclear export signal, thus abolishing nuclear export.

The protein localises to the nucleus. It localises to the cytoplasm. In terms of biological role, transcription activator involved in oxidative stress response and redox homeostasis. Regulates the transcription of genes encoding antioxidant enzymes and components of the cellular thiol-reducing pathways. Involved in antifungal resistance to fluconazole. This chain is AP-1-like transcription factor yap1, found in Cryptococcus neoformans var. grubii serotype A (strain H99 / ATCC 208821 / CBS 10515 / FGSC 9487) (Filobasidiella neoformans var. grubii).